The following is a 120-amino-acid chain: Large ribosomal subunit protein bL20 (120 aa).

The protein belongs to the bacterial ribosomal protein bL20 family.

Its function is as follows. Binds directly to 23S ribosomal RNA and is necessary for the in vitro assembly process of the 50S ribosomal subunit. It is not involved in the protein synthesizing functions of that subunit. The polypeptide is Large ribosomal subunit protein bL20 (Ligilactobacillus salivarius (strain UCC118) (Lactobacillus salivarius)).